The primary structure comprises 476 residues: tRNA(Ile)-lysidine synthase (476 aa).

30–35 is an ATP binding site; sequence SGGPDS.

The protein belongs to the tRNA(Ile)-lysidine synthase family.

Its subcellular location is the cytoplasm. The catalysed reaction is cytidine(34) in tRNA(Ile2) + L-lysine + ATP = lysidine(34) in tRNA(Ile2) + AMP + diphosphate + H(+). Its function is as follows. Ligates lysine onto the cytidine present at position 34 of the AUA codon-specific tRNA(Ile) that contains the anticodon CAU, in an ATP-dependent manner. Cytidine is converted to lysidine, thus changing the amino acid specificity of the tRNA from methionine to isoleucine. This is tRNA(Ile)-lysidine synthase from Bacillus cereus (strain ATCC 10987 / NRS 248).